We begin with the raw amino-acid sequence, 1298 residues long: Phosphoribosylformylglycinamidine synthase (1298 aa).

Residues 298–328 (TAIAPFPGASTGSGGEIRDEGATGRGAKPKA) form a disordered region. ATP-binding positions include 305–316 (GASTGSGGEIRD), 384–386 (TGY), and Ala676. 4 residues coordinate Mg(2+): Asp677, Glu716, Asn720, and Asp884. Ser886 is an ATP binding site. The region spanning 1045–1298 (VAILREQGVN…MFRNARVWVD (254 aa)) is the Glutamine amidotransferase type-1 domain. Cys1138 functions as the Nucleophile in the catalytic mechanism. Residues His1263 and Glu1265 contribute to the active site.

The protein in the N-terminal section; belongs to the FGAMS family. In terms of assembly, monomer.

The protein resides in the cytoplasm. The enzyme catalyses N(2)-formyl-N(1)-(5-phospho-beta-D-ribosyl)glycinamide + L-glutamine + ATP + H2O = 2-formamido-N(1)-(5-O-phospho-beta-D-ribosyl)acetamidine + L-glutamate + ADP + phosphate + H(+). Its pathway is purine metabolism; IMP biosynthesis via de novo pathway; 5-amino-1-(5-phospho-D-ribosyl)imidazole from N(2)-formyl-N(1)-(5-phospho-D-ribosyl)glycinamide: step 1/2. Its function is as follows. Phosphoribosylformylglycinamidine synthase involved in the purines biosynthetic pathway. Catalyzes the ATP-dependent conversion of formylglycinamide ribonucleotide (FGAR) and glutamine to yield formylglycinamidine ribonucleotide (FGAM) and glutamate. This Pseudomonas aeruginosa (strain ATCC 15692 / DSM 22644 / CIP 104116 / JCM 14847 / LMG 12228 / 1C / PRS 101 / PAO1) protein is Phosphoribosylformylglycinamidine synthase.